A 513-amino-acid chain; its full sequence is MTSYMLGIDIGTTSTKAVLFSEKGDVIQKESIGYALYTPDISTAEQNPDEIFQAVIQSTAKIMQQHPDKQPSFISFSSAMHSVIAMDENDKPLTSCITWADNRSEGWAHKIKEEMNGHNVYKRTGTPIHPMAPLSKITWIVNEHPEIAVKAKKYIGIKEYIFKKLFDQYVVDYSLASAMGMMNLKTLAWDEEALAIAGITPDHLSKLVPTTAIFHHCNPELAAMMGIDPQTPFVIGASDGVLSNLGVNAIKKGEIAVTIGTSGAIRPIIDKPQTDEKGRIFCYALTENHWVIGGPVNNGGIVLRWIRDEFASSEIETAKRLGIDPYDVLTKIAERVRPGADGLLFHPYLAGERAPLWNPDVPGSFFGLTMSHKKEHMIRAALEGVIYNLYTVFLALTECMDGPVARIQATGGFARSDVWRQMMADIFESEVVVPESYESSCLGACILGLYATGKIDSFDVVSDMIGSTHRHAPKEESAKEYRKLMPLFINLSRALENEYTQIANYQRSLSSKK.

ATP is bound by residues Lys16, Thr261, Gly300, and Gly412 to Ser416.

It belongs to the FGGY kinase family.

The enzyme catalyses D-gluconate + ATP = 6-phospho-D-gluconate + ADP + H(+). It participates in carbohydrate acid metabolism; D-gluconate degradation. Catabolite repression by gluconate. The polypeptide is Gluconokinase (gntK) (Bacillus licheniformis).